The chain runs to 196 residues: Ribonuclease HII (196 aa).

In terms of domain architecture, RNase H type-2 spans 4–196 (IWVCGVDEAG…PVRRVLEGSF (193 aa)). A divalent metal cation is bound by residues Asp10, Glu11, and Asp106.

It belongs to the RNase HII family. Mn(2+) serves as cofactor. The cofactor is Mg(2+).

It localises to the cytoplasm. It catalyses the reaction Endonucleolytic cleavage to 5'-phosphomonoester.. Its function is as follows. Endonuclease that specifically degrades the RNA of RNA-DNA hybrids. The chain is Ribonuclease HII from Polynucleobacter asymbioticus (strain DSM 18221 / CIP 109841 / QLW-P1DMWA-1) (Polynucleobacter necessarius subsp. asymbioticus).